We begin with the raw amino-acid sequence, 165 residues long: U11/U12 small nuclear ribonucleoprotein 25 kDa protein (165 aa).

One can recognise a Ubiquitin-like domain in the interval 52–137 (MRLSVVKLDG…IRNNSQVTFM (86 aa)). The segment at 145 to 165 (RGRHSKRKKHRLFRSLHKTSS) is disordered.

As to quaternary structure, component of the U11/U12 snRNPs that are part of the U12-type spliceosome.

It is found in the nucleus. The sequence is that of U11/U12 small nuclear ribonucleoprotein 25 kDa protein (SNRNP25) from Arabidopsis thaliana (Mouse-ear cress).